Here is a 63-residue protein sequence, read N- to C-terminus: Translational regulator CsrA (63 aa).

It belongs to the CsrA/RsmA family. In terms of assembly, homodimer; the beta-strands of each monomer intercalate to form a hydrophobic core, while the alpha-helices form wings that extend away from the core.

The protein resides in the cytoplasm. In terms of biological role, a key translational regulator that binds mRNA to regulate translation initiation and/or mRNA stability. Mediates global changes in gene expression, shifting from rapid growth to stress survival by linking envelope stress, the stringent response and the catabolite repression systems. Usually binds in the 5'-UTR; binding at or near the Shine-Dalgarno sequence prevents ribosome-binding, repressing translation, binding elsewhere in the 5'-UTR can activate translation and/or stabilize the mRNA. Its function is antagonized by small RNA(s). In Haemophilus influenzae (strain PittEE), this protein is Translational regulator CsrA.